Consider the following 151-residue polypeptide: UPF0208 membrane protein YfbV (151 aa).

2 helical membrane passes run 46–65 and 69–91; these read YAIR…QIAL and LGPA…WWLG.

It belongs to the UPF0208 family.

The protein localises to the cell inner membrane. The protein is UPF0208 membrane protein YfbV of Escherichia coli O1:K1 / APEC.